The sequence spans 290 residues: MLKDIFTKKKKYASVPSDQAKHDVPEGIMTKCPKCKKIMLTKELDKNMRVCMNCDYHFPMNAKQRIESLMDEQSFEEFNQGMLSENPLGFPGYLEKLEKDREKTSLNEAVVTGKGTIGGHPAVVAVMDSSFRMGSMGSVVGEKITLAIEKAKADKVPFIIFTASGGARMQEGVLSLMQMAKTSSALKLFSEEQGLIISVMTHPTTGGVSASFASLGDYNFAEPGALIGFAGRRIIEQTIGEKLPEDFQTAEFLLKHGQLDAVIHRDDMKKTLENLLDMHQTGGDIEWLQD.

Residues 28–290 (IMTKCPKCKK…TGGDIEWLQD (263 aa)) form the CoA carboxyltransferase N-terminal domain. Residues Cys-32, Cys-35, Cys-51, and Cys-54 each contribute to the Zn(2+) site. The C4-type zinc finger occupies 32–54 (CPKCKKIMLTKELDKNMRVCMNC).

The protein belongs to the AccD/PCCB family. As to quaternary structure, acetyl-CoA carboxylase is a heterohexamer composed of biotin carboxyl carrier protein (AccB), biotin carboxylase (AccC) and two subunits each of ACCase subunit alpha (AccA) and ACCase subunit beta (AccD). Zn(2+) is required as a cofactor.

It is found in the cytoplasm. The catalysed reaction is N(6)-carboxybiotinyl-L-lysyl-[protein] + acetyl-CoA = N(6)-biotinyl-L-lysyl-[protein] + malonyl-CoA. It functions in the pathway lipid metabolism; malonyl-CoA biosynthesis; malonyl-CoA from acetyl-CoA: step 1/1. Its activity is regulated as follows. Inhibited by pyrrolidine dione antibiotics moiramide B (CPD1) and CPD2. Its function is as follows. Component of the acetyl coenzyme A carboxylase (ACC) complex. Biotin carboxylase (BC) catalyzes the carboxylation of biotin on its carrier protein (BCCP) and then the CO(2) group is transferred by the transcarboxylase to acetyl-CoA to form malonyl-CoA. The sequence is that of Acetyl-coenzyme A carboxylase carboxyl transferase subunit beta from Bacillus subtilis (strain 168).